We begin with the raw amino-acid sequence, 407 residues long: Peptidase T (407 aa).

Histidine 82 is a Zn(2+) binding site. Aspartate 84 is an active-site residue. Aspartate 143 is a binding site for Zn(2+). Residue glutamate 177 is the Proton acceptor of the active site. Positions 178, 200, and 382 each coordinate Zn(2+).

Belongs to the peptidase M20B family. Requires Zn(2+) as cofactor.

The protein localises to the cytoplasm. The enzyme catalyses Release of the N-terminal residue from a tripeptide.. Cleaves the N-terminal amino acid of tripeptides. This chain is Peptidase T, found in Streptococcus pyogenes serotype M1.